The chain runs to 152 residues: MLP-like protein 165 (152 aa).

It belongs to the MLP family.

This is MLP-like protein 165 (MLP165) from Arabidopsis thaliana (Mouse-ear cress).